Reading from the N-terminus, the 291-residue chain is ATP synthase gamma chain (291 aa).

It belongs to the ATPase gamma chain family. In terms of assembly, F-type ATPases have 2 components, CF(1) - the catalytic core - and CF(0) - the membrane proton channel. CF(1) has five subunits: alpha(3), beta(3), gamma(1), delta(1), epsilon(1). CF(0) has three main subunits: a, b and c.

Its subcellular location is the cell membrane. Functionally, produces ATP from ADP in the presence of a proton gradient across the membrane. The gamma chain is believed to be important in regulating ATPase activity and the flow of protons through the CF(0) complex. In Streptococcus pyogenes serotype M3 (strain ATCC BAA-595 / MGAS315), this protein is ATP synthase gamma chain.